A 1169-amino-acid chain; its full sequence is Chromosome partition protein Smc (1169 aa).

32–39 provides a ligand contact to ATP; sequence PNGCGKSN. Coiled coils occupy residues 170–265 and 307–481; these read ISKY…TGEE and IRHT…ERLN. Positions 525–620 constitute an SMC hinge domain; it reads DRLGEKIEVA…CASDPAEAAE (96 aa). Coiled coils occupy residues 656-914 and 985-1014; these read ALAR…MKLA and RYLE…ECRA.

The protein belongs to the SMC family. As to quaternary structure, homodimer.

The protein localises to the cytoplasm. Its function is as follows. Required for chromosome condensation and partitioning. This Methylococcus capsulatus (strain ATCC 33009 / NCIMB 11132 / Bath) protein is Chromosome partition protein Smc.